We begin with the raw amino-acid sequence, 140 residues long: Large ribosomal subunit protein bL17 (140 aa).

It belongs to the bacterial ribosomal protein bL17 family. In terms of assembly, part of the 50S ribosomal subunit. Contacts protein L32.

This is Large ribosomal subunit protein bL17 from Rhizorhabdus wittichii (strain DSM 6014 / CCUG 31198 / JCM 15750 / NBRC 105917 / EY 4224 / RW1) (Sphingomonas wittichii).